The sequence spans 307 residues: Shikimate kinase 2, chloroplastic (307 aa).

The transit peptide at 1 to 60 (MEARAGLAMQSRAAVGVGAGPGVGRRGRAVIRVGKRPTAASLRVGGPAGPAAAKPLAPLY) directs the protein to the chloroplast. An ATP-binding site is contributed by 101 to 108 (GMMGSGKS). Residue Ser-108 participates in Mg(2+) binding. Substrate contacts are provided by Asp-126, Arg-151, and Gly-173. Arg-212 contacts ATP. Residues 285 to 307 (HSTSSGPVGDLIVDSQNRRTKAL) form a disordered region.

The protein belongs to the shikimate kinase family. Requires Mg(2+) as cofactor. Expressed in panicles.

The protein localises to the plastid. It is found in the chloroplast. The enzyme catalyses shikimate + ATP = 3-phosphoshikimate + ADP + H(+). The protein operates within metabolic intermediate biosynthesis; chorismate biosynthesis; chorismate from D-erythrose 4-phosphate and phosphoenolpyruvate: step 5/7. Its function is as follows. Catalyzes the specific phosphorylation of the 3-hydroxyl group of shikimic acid using ATP as a cosubstrate. This Oryza sativa subsp. japonica (Rice) protein is Shikimate kinase 2, chloroplastic (SK2).